A 253-amino-acid polypeptide reads, in one-letter code: MSAPTDRSATPAERNEKSKYKRILLKLSGEALIGEHEFGIDPKVLDRMALEIGQLVGIGVQVGIVIGGGNLFRGAALHAAGMERVTGDHMGMLATVMNGLAMRDALERSNIRSRVMSAIPMSGVVEHYDRRTAIRYLTSGDVVIFSAGTGNPFFTTDSAACLRGIEIDANVVLKATKVDGVYDKDPVKHADAAKYERLTYDDVLDQKLGVMDLTAICLVRDHDMPVRVFDMTKPGALLNLVVGGKEGTLVDRG.

26–29 (KLSG) contributes to the ATP binding site. G68 contacts UMP. ATP contacts are provided by G69 and R73. UMP contacts are provided by residues D88 and 149 to 156 (TGNPFFTT). Positions 176, 182, and 185 each coordinate ATP.

Belongs to the UMP kinase family. Homohexamer.

It localises to the cytoplasm. The enzyme catalyses UMP + ATP = UDP + ADP. Its pathway is pyrimidine metabolism; CTP biosynthesis via de novo pathway; UDP from UMP (UMPK route): step 1/1. Inhibited by UTP. Functionally, catalyzes the reversible phosphorylation of UMP to UDP. The sequence is that of Uridylate kinase from Chromohalobacter salexigens (strain ATCC BAA-138 / DSM 3043 / CIP 106854 / NCIMB 13768 / 1H11).